Here is a 517-residue protein sequence, read N- to C-terminus: Salicyloyl-CoA 5-hydroxylase (517 aa).

This sequence belongs to the aromatic-ring hydroxylase family. KMO subfamily.

It catalyses the reaction 2-hydroxybenzoyl-CoA + NADH + O2 + H(+) = 2,5-dihydroxybenzoyl-CoA + NAD(+) + H2O. Functionally, involved in the degradation of salicylate via a pathway involving coenzyme A derivative. Catalyzes the aromatic hydroxylation of salicylyl-CoA to yield gentisyl-CoA. The chain is Salicyloyl-CoA 5-hydroxylase from Streptomyces sp.